The following is a 187-amino-acid chain: Elongation factor P (187 aa).

This sequence belongs to the elongation factor P family.

The protein resides in the cytoplasm. The protein operates within protein biosynthesis; polypeptide chain elongation. In terms of biological role, involved in peptide bond synthesis. Stimulates efficient translation and peptide-bond synthesis on native or reconstituted 70S ribosomes in vitro. Probably functions indirectly by altering the affinity of the ribosome for aminoacyl-tRNA, thus increasing their reactivity as acceptors for peptidyl transferase. The protein is Elongation factor P of Pseudarthrobacter chlorophenolicus (strain ATCC 700700 / DSM 12829 / CIP 107037 / JCM 12360 / KCTC 9906 / NCIMB 13794 / A6) (Arthrobacter chlorophenolicus).